A 550-amino-acid chain; its full sequence is Formate--tetrahydrofolate ligase (550 aa).

60–67 (TPFGEGKT) contributes to the ATP binding site.

It belongs to the formate--tetrahydrofolate ligase family.

The catalysed reaction is (6S)-5,6,7,8-tetrahydrofolate + formate + ATP = (6R)-10-formyltetrahydrofolate + ADP + phosphate. Its pathway is one-carbon metabolism; tetrahydrofolate interconversion. This chain is Formate--tetrahydrofolate ligase, found in Campylobacter curvus (strain 525.92).